A 386-amino-acid chain; its full sequence is ATP synthase subunit a (386 aa).

4 consecutive transmembrane segments (helical) span residues 150 to 170 (FTNE…LFFV), 243 to 263 (HFLI…IVGF), 270 to 290 (FFSF…LVLL), and 310 to 330 (MMAG…MLFL).

This sequence belongs to the ATPase A chain family. In terms of assembly, F-type ATPases have 2 components, CF(1) - the catalytic core - and CF(0) - the membrane proton channel. CF(1) has five subunits: alpha(3), beta(3), gamma(1), delta(1), epsilon(1). CF(0) has three main subunits: a, b and c.

The protein resides in the mitochondrion inner membrane. Mitochondrial membrane ATP synthase (F(1)F(0) ATP synthase or Complex V) produces ATP from ADP in the presence of a proton gradient across the membrane which is generated by electron transport complexes of the respiratory chain. F-type ATPases consist of two structural domains, F(1) - containing the extramembraneous catalytic core and F(0) - containing the membrane proton channel, linked together by a central stalk and a peripheral stalk. During catalysis, ATP synthesis in the catalytic domain of F(1) is coupled via a rotary mechanism of the central stalk subunits to proton translocation. Key component of the proton channel; it may play a direct role in the translocation of protons across the membrane. The polypeptide is ATP synthase subunit a (ATP6) (Triticum aestivum (Wheat)).